Consider the following 349-residue polypeptide: Protein-glutamate methylesterase/protein-glutamine glutaminase (349 aa).

The 118-residue stretch at 5 to 122 (RVLSVDDSAL…REGMLAYNEM (118 aa)) folds into the Response regulatory domain. Asp56 is modified (4-aspartylphosphate). One can recognise a CheB-type methylesterase domain in the interval 152 to 344 (LLSSEKLIAI…QQMLAKISAG (193 aa)). Catalysis depends on residues Ser164, His190, and Asp286.

It belongs to the CheB family. In terms of assembly, interacts with CheA. Binds to a C-terminal pentapeptide sequence carried by certain receptors. Phosphorylated by CheA. Phosphorylation of the N-terminal regulatory domain activates the methylesterase activity.

The protein localises to the cytoplasm. It catalyses the reaction [protein]-L-glutamate 5-O-methyl ester + H2O = L-glutamyl-[protein] + methanol + H(+). The catalysed reaction is L-glutaminyl-[protein] + H2O = L-glutamyl-[protein] + NH4(+). Its activity is regulated as follows. Methylesterase activity is activated via phosphorylation in response to negative chemotactic stimuli and is inhibited in the presence of attractants. Activation requires both CheA and CheW. Functionally, involved in chemotaxis. Part of a chemotaxis signal transduction system that modulates chemotaxis in response to various stimuli. Catalyzes the demethylation of specific methylglutamate residues introduced into the chemoreceptors (methyl-accepting chemotaxis proteins or MCP) by CheR. Also mediates the irreversible deamidation of specific glutamine residues to glutamic acid. Catalyzes its own deactivation by removing the activating phosphoryl group. This Escherichia coli (strain K12) protein is Protein-glutamate methylesterase/protein-glutamine glutaminase.